Here is a 396-residue protein sequence, read N- to C-terminus: L-lactate dehydrogenase (396 aa).

One can recognise an FMN hydroxy acid dehydrogenase domain in the interval 1 to 380; it reads MIISAASDYR…SGDSLVQELG (380 aa). Tyrosine 24 lines the substrate pocket. Positions 106 and 127 each coordinate FMN. Tyrosine 129 provides a ligand contact to substrate. An FMN-binding site is contributed by threonine 155. Arginine 164 serves as a coordination point for substrate. Residue lysine 251 coordinates FMN. Histidine 275 (proton acceptor) is an active-site residue. Arginine 278 is a substrate binding site. 306–330 provides a ligand contact to FMN; the sequence is DSGIRNGLDVVRMIALGADTVLLGR.

Belongs to the FMN-dependent alpha-hydroxy acid dehydrogenase family. It depends on FMN as a cofactor.

It localises to the cell inner membrane. The enzyme catalyses (S)-lactate + A = pyruvate + AH2. Functionally, catalyzes the conversion of L-lactate to pyruvate. Is coupled to the respiratory chain. The protein is L-lactate dehydrogenase of Salmonella arizonae (strain ATCC BAA-731 / CDC346-86 / RSK2980).